The sequence spans 206 residues: ATP phosphoribosyltransferase (206 aa).

Belongs to the ATP phosphoribosyltransferase family. Short subfamily. As to quaternary structure, heteromultimer composed of HisG and HisZ subunits.

It localises to the cytoplasm. It catalyses the reaction 1-(5-phospho-beta-D-ribosyl)-ATP + diphosphate = 5-phospho-alpha-D-ribose 1-diphosphate + ATP. The protein operates within amino-acid biosynthesis; L-histidine biosynthesis; L-histidine from 5-phospho-alpha-D-ribose 1-diphosphate: step 1/9. In terms of biological role, catalyzes the condensation of ATP and 5-phosphoribose 1-diphosphate to form N'-(5'-phosphoribosyl)-ATP (PR-ATP). Has a crucial role in the pathway because the rate of histidine biosynthesis seems to be controlled primarily by regulation of HisG enzymatic activity. The polypeptide is ATP phosphoribosyltransferase (Campylobacter curvus (strain 525.92)).